The primary structure comprises 131 residues: Biogenesis of lysosome-related organelles complex 1 subunit 5 (131 aa).

This sequence belongs to the BLOC1S5 family. Component of the biogenesis of lysosome-related organelles complex-1 (BLOC-1) composed at least of blos-1, blos-2, blos-4, dsbn-1, glo-2, mutd-1 and snpn-1.

In terms of biological role, component of the biogenesis of lysosome-related organelles complex-1 (BLOC-1) involved in gut granule biogenesis. In Caenorhabditis elegans, this protein is Biogenesis of lysosome-related organelles complex 1 subunit 5 (mutd-1).